Here is a 426-residue protein sequence, read N- to C-terminus: Cell adhesion molecule CEACAM16 (426 aa).

Residues 1 to 22 form the signal peptide; it reads MKMPLTWYSWFLLSAWILNTGA. Asn-38 carries an N-linked (GlcNAc...) asparagine glycan. The disordered stretch occupies residues 77-96; it reads ETPGPAHTGREAVRPDGSLD. Positions 84 to 95 are enriched in basic and acidic residues; sequence TGREAVRPDGSL. Ig-like C2-type domains are found at residues 134–219 and 224–310; these read PPTV…LNLT and PERV…ASVV. Cys-155 and Cys-202 are disulfide-bonded. An N-linked (GlcNAc...) asparagine glycan is attached at Asn-217. Residues Cys-253 and Cys-294 are joined by a disulfide bond.

This sequence belongs to the immunoglobulin superfamily. CEA family. Homooligomer; can for homodimers and homotetramers. Interacts with TECTA and TECTB. In terms of tissue distribution, expressed in cochlear outer hair cells (OHC).

Its subcellular location is the secreted. Required for proper hearing, plays a role in maintaining the integrity of the tectorial membrane. The protein is Cell adhesion molecule CEACAM16 of Mus musculus (Mouse).